Reading from the N-terminus, the 155-residue chain is 6,7-dimethyl-8-ribityllumazine synthase (155 aa).

Residues Phe-23, 57–59 (AFE), and 81–83 (AVI) each bind 5-amino-6-(D-ribitylamino)uracil. 86–87 (ST) provides a ligand contact to (2S)-2-hydroxy-3-oxobutyl phosphate. The active-site Proton donor is the His-89. Phe-114 is a 5-amino-6-(D-ribitylamino)uracil binding site. Arg-128 lines the (2S)-2-hydroxy-3-oxobutyl phosphate pocket.

It belongs to the DMRL synthase family.

It catalyses the reaction (2S)-2-hydroxy-3-oxobutyl phosphate + 5-amino-6-(D-ribitylamino)uracil = 6,7-dimethyl-8-(1-D-ribityl)lumazine + phosphate + 2 H2O + H(+). It participates in cofactor biosynthesis; riboflavin biosynthesis; riboflavin from 2-hydroxy-3-oxobutyl phosphate and 5-amino-6-(D-ribitylamino)uracil: step 1/2. Functionally, catalyzes the formation of 6,7-dimethyl-8-ribityllumazine by condensation of 5-amino-6-(D-ribitylamino)uracil with 3,4-dihydroxy-2-butanone 4-phosphate. This is the penultimate step in the biosynthesis of riboflavin. This chain is 6,7-dimethyl-8-ribityllumazine synthase, found in Desulfatibacillum aliphaticivorans.